A 385-amino-acid chain; its full sequence is Ethanolamine kinase 2 (385 aa).

It belongs to the choline/ethanolamine kinase family. Expressed in testis and liver. Low expression in ovary and kidney.

It catalyses the reaction ethanolamine + ATP = phosphoethanolamine + ADP + H(+). It functions in the pathway phospholipid metabolism; phosphatidylethanolamine biosynthesis; phosphatidylethanolamine from ethanolamine: step 1/3. Its function is as follows. Highly specific for ethanolamine phosphorylation. Does not have choline kinase activity. The protein is Ethanolamine kinase 2 (Etnk2) of Mus musculus (Mouse).